Reading from the N-terminus, the 115-residue chain is Large ribosomal subunit protein P2 (115 aa).

Met-1 is modified (N-acetylmethionine). A phosphoserine mark is found at Ser-17 and Ser-19. Lys-21 is modified (N6-acetyllysine; alternate). An N6-succinyllysine; alternate modification is found at Lys-21. Residues 69–90 are compositionally biased toward low complexity; it reads GAXAVAAAPGSXAPAAGSAPAA. The disordered stretch occupies residues 69 to 115; the sequence is GAXAVAAAPGSXAPAAGSAPAAAEEKKEEKKEESEESDDDMGFGLFD. Phosphoserine occurs at positions 79 and 86. Over residues 91–101 the composition is skewed to basic and acidic residues; it reads AEEKKEEKKEE. 2 positions are modified to phosphoserine: Ser-102 and Ser-105.

Belongs to the eukaryotic ribosomal protein P1/P2 family. As to quaternary structure, heterodimer with RPLP1 at the lateral ribosomal stalk of the large ribosomal subunit.

In terms of biological role, plays an important role in the elongation step of protein synthesis. This is Large ribosomal subunit protein P2 (RPLP2) from Sus scrofa (Pig).